Here is a 512-residue protein sequence, read N- to C-terminus: Citrate synthase (512 aa).

Catalysis depends on residues His-288, His-327, and Asp-383. The segment at 483-512 is disordered; it reads AIPKTATGSKSQLSASIEQSFGEKISPQSH. Positions 488–501 are enriched in polar residues; it reads ATGSKSQLSASIEQ.

Belongs to the citrate synthase family.

The protein localises to the cytoplasm. It catalyses the reaction oxaloacetate + acetyl-CoA + H2O = citrate + CoA + H(+). It participates in carbohydrate metabolism; tricarboxylic acid cycle; isocitrate from oxaloacetate: step 1/2. The polypeptide is Citrate synthase (gltA) (Dictyostelium discoideum (Social amoeba)).